The primary structure comprises 887 residues: DNA mismatch repair protein MutS (887 aa).

626 to 633 (GPNMAGKS) lines the ATP pocket.

Belongs to the DNA mismatch repair MutS family.

Functionally, this protein is involved in the repair of mismatches in DNA. It is possible that it carries out the mismatch recognition step. This protein has a weak ATPase activity. This Methanococcoides burtonii (strain DSM 6242 / NBRC 107633 / OCM 468 / ACE-M) protein is DNA mismatch repair protein MutS.